A 130-amino-acid chain; its full sequence is Sulfurtransferase TusD (130 aa).

Cys78 (cysteine persulfide intermediate) is an active-site residue.

The protein belongs to the DsrE/TusD family. As to quaternary structure, heterohexamer, formed by a dimer of trimers. The hexameric TusBCD complex contains 2 copies each of TusB, TusC and TusD. The TusBCD complex interacts with TusE.

It localises to the cytoplasm. Functionally, part of a sulfur-relay system required for 2-thiolation of 5-methylaminomethyl-2-thiouridine (mnm(5)s(2)U) at tRNA wobble positions. Accepts sulfur from TusA and transfers it in turn to TusE. The protein is Sulfurtransferase TusD of Buchnera aphidicola subsp. Baizongia pistaciae (strain Bp).